Here is a 101-residue protein sequence, read N- to C-terminus: Integration host factor subunit alpha (101 aa).

This sequence belongs to the bacterial histone-like protein family. In terms of assembly, heterodimer of an alpha and a beta chain.

Functionally, this protein is one of the two subunits of integration host factor, a specific DNA-binding protein that functions in genetic recombination as well as in transcriptional and translational control. The sequence is that of Integration host factor subunit alpha from Alkalilimnicola ehrlichii (strain ATCC BAA-1101 / DSM 17681 / MLHE-1).